Reading from the N-terminus, the 378-residue chain is UDP-4-amino-4-deoxy-L-arabinose--oxoglutarate aminotransferase (378 aa).

An N6-(pyridoxal phosphate)lysine modification is found at K182.

Belongs to the DegT/DnrJ/EryC1 family. ArnB subfamily. As to quaternary structure, homodimer. It depends on pyridoxal 5'-phosphate as a cofactor.

The catalysed reaction is UDP-4-amino-4-deoxy-beta-L-arabinose + 2-oxoglutarate = UDP-beta-L-threo-pentopyranos-4-ulose + L-glutamate. It participates in nucleotide-sugar biosynthesis; UDP-4-deoxy-4-formamido-beta-L-arabinose biosynthesis; UDP-4-deoxy-4-formamido-beta-L-arabinose from UDP-alpha-D-glucuronate: step 2/3. Its pathway is bacterial outer membrane biogenesis; lipopolysaccharide biosynthesis. In terms of biological role, catalyzes the conversion of UDP-4-keto-arabinose (UDP-Ara4O) to UDP-4-amino-4-deoxy-L-arabinose (UDP-L-Ara4N). The modified arabinose is attached to lipid A and is required for resistance to polymyxin and cationic antimicrobial peptides. This Aeromonas salmonicida (strain A449) protein is UDP-4-amino-4-deoxy-L-arabinose--oxoglutarate aminotransferase.